We begin with the raw amino-acid sequence, 347 residues long: Phosphate acyltransferase (347 aa).

It belongs to the PlsX family. Homodimer. Probably interacts with PlsY.

The protein resides in the cytoplasm. The catalysed reaction is a fatty acyl-[ACP] + phosphate = an acyl phosphate + holo-[ACP]. The protein operates within lipid metabolism; phospholipid metabolism. In terms of biological role, catalyzes the reversible formation of acyl-phosphate (acyl-PO(4)) from acyl-[acyl-carrier-protein] (acyl-ACP). This enzyme utilizes acyl-ACP as fatty acyl donor, but not acyl-CoA. The chain is Phosphate acyltransferase from Dehalococcoides mccartyi (strain ATCC BAA-2100 / JCM 16839 / KCTC 5957 / BAV1).